Here is a 203-residue protein sequence, read N- to C-terminus: Urease accessory protein UreG (203 aa).

Residue 12–19 (GPVGSGKT) coordinates GTP.

The protein belongs to the SIMIBI class G3E GTPase family. UreG subfamily. Homodimer. UreD, UreF and UreG form a complex that acts as a GTP-hydrolysis-dependent molecular chaperone, activating the urease apoprotein by helping to assemble the nickel containing metallocenter of UreC. The UreE protein probably delivers the nickel.

Its subcellular location is the cytoplasm. Its function is as follows. Facilitates the functional incorporation of the urease nickel metallocenter. This process requires GTP hydrolysis, probably effectuated by UreG. This is Urease accessory protein UreG from Alteromonas mediterranea (strain DSM 17117 / CIP 110805 / LMG 28347 / Deep ecotype).